Here is a 178-residue protein sequence, read N- to C-terminus: DELTA-miturgitoxin-Cp3a (178 aa).

The first 18 residues, Met-1–Ser-18, serve as a signal peptide directing secretion. Residues Glu-19–Arg-46 constitute a propeptide that is removed on maturation. A Processing quadruplet motif motif is present at residues Glu-43–Arg-46. Disulfide bonds link Cys-48-Cys-63, Cys-55-Cys-72, Cys-62-Cys-86, Cys-74-Cys-84, Cys-113-Cys-128, Cys-120-Cys-137, Cys-127-Cys-155, and Cys-139-Cys-153.

This sequence belongs to the spider toxin CSTX family. Double-CSTX subfamily. Post-translationally, cleavage of the propeptide depends on the processing quadruplet motif (XXXR, with at least one of X being E). In terms of tissue distribution, expressed by the venom gland.

It is found in the secreted. In terms of biological role, spider venom toxin that exhibits cytolytic activity by forming an alpha-helix across the membrane. Lethal to insect larvae. This is DELTA-miturgitoxin-Cp3a from Cheiracanthium punctorium (Yellow sac spider).